We begin with the raw amino-acid sequence, 482 residues long: Nodulation protein T (482 aa).

A signal peptide spans Met1–Ser17. Cys18 carries the N-palmitoyl cysteine lipid modification. Residue Cys18 is the site of S-diacylglycerol cysteine attachment.

This sequence belongs to the outer membrane factor (OMF) (TC 1.B.17) family.

The protein resides in the cell membrane. In Rhizobium leguminosarum bv. viciae, this protein is Nodulation protein T (nodT).